A 769-amino-acid chain; its full sequence is Discoidin, CUB and LCCL domain-containing protein 2 (769 aa).

A compositionally biased stretch (low complexity) spans 1 to 29 (MASRAPLRAARSPQDPGGRAAPAATGRAP). Positions 1 to 39 (MASRAPLRAARSPQDPGGRAAPAATGRAPLPSAGWCPLP) are disordered. An N-terminal signal peptide occupies residues 1 to 63 (MASRAPLRAA…LLLLLPDAGA (63 aa)). At 64 to 523 (QKGDGCGHTV…VTPSVTKDVA (460 aa)) the chain is on the extracellular side. 2 disulfides stabilise this stretch: C69/C96 and C123/C145. The region spanning 69–184 (CGHTVLGPES…RGFLASYSVI (116 aa)) is the CUB domain. N92 carries N-linked (GlcNAc...) asparagine glycosylation. Residue N152 is glycosylated (N-linked (GlcNAc...) asparagine). One can recognise an LCCL domain in the interval 184 to 282 (IDKQDLITCL…MVGYLSTSLF (99 aa)). C212 and C234 are joined by a disulfide. An N-linked (GlcNAc...) asparagine glycan is attached at N269. C289 and C446 are disulfide-bonded. Residues 289–446 (CYGTLGMESG…IAMKVELLGC (158 aa)) enclose the F5/8 type C domain. The disordered stretch occupies residues 455–476 (PKLTQPPPPRNSNNLKNTTVHP). Residues 465–474 (NSNNLKNTTV) show a composition bias toward polar residues. N471 and N511 each carry an N-linked (GlcNAc...) asparagine glycan. A helical transmembrane segment spans residues 524 to 544 (LAAVLVPVLVMALTTLILILV). The Cytoplasmic segment spans residues 545 to 769 (CAWHWRNRKK…EKFDAFKETL (225 aa)). Position 601 is a phosphoserine (S601). Positions 719-769 (SCSSGQAQYDTPKGGKPAAAPEELVYQVPQSTQEASGAGRDEKFDAFKETL) are disordered. Over residues 757-769 (GRDEKFDAFKETL) the composition is skewed to basic and acidic residues.

It localises to the membrane. In Rattus norvegicus (Rat), this protein is Discoidin, CUB and LCCL domain-containing protein 2 (Dcbld2).